Reading from the N-terminus, the 663-residue chain is UvrABC system protein B (663 aa).

Residues 1 to 10 (MIDKRDDKPF) show a composition bias toward basic and acidic residues. Residues 1 to 23 (MIDKRDDKPFKLKSKYKPSGDQP) are disordered. The region spanning 31–418 (DNIEGGEKAQ…TNTIIEQIIR (388 aa)) is the Helicase ATP-binding domain. 44–51 (GATGTGKT) contributes to the ATP binding site. The Beta-hairpin signature appears at 97–120 (YYDYYQPEAYVPSSDTYIEKDSSV). The Helicase C-terminal domain maps to 435 to 601 (QMDDLLGEIN…TIKKDIRGLI (167 aa)). The UVR domain occupies 627–662 (KEAINALQKQMQEAAELLDFELAAQMRDLILELKLM).

It belongs to the UvrB family. In terms of assembly, forms a heterotetramer with UvrA during the search for lesions. Interacts with UvrC in an incision complex.

The protein resides in the cytoplasm. The UvrABC repair system catalyzes the recognition and processing of DNA lesions. A damage recognition complex composed of 2 UvrA and 2 UvrB subunits scans DNA for abnormalities. Upon binding of the UvrA(2)B(2) complex to a putative damaged site, the DNA wraps around one UvrB monomer. DNA wrap is dependent on ATP binding by UvrB and probably causes local melting of the DNA helix, facilitating insertion of UvrB beta-hairpin between the DNA strands. Then UvrB probes one DNA strand for the presence of a lesion. If a lesion is found the UvrA subunits dissociate and the UvrB-DNA preincision complex is formed. This complex is subsequently bound by UvrC and the second UvrB is released. If no lesion is found, the DNA wraps around the other UvrB subunit that will check the other stand for damage. In Streptococcus pyogenes serotype M6 (strain ATCC BAA-946 / MGAS10394), this protein is UvrABC system protein B.